We begin with the raw amino-acid sequence, 1370 residues long: DNA-directed RNA polymerase subunit beta (1370 aa).

Belongs to the RNA polymerase beta chain family. The RNAP catalytic core consists of 2 alpha, 1 beta, 1 beta' and 1 omega subunit. When a sigma factor is associated with the core the holoenzyme is formed, which can initiate transcription.

It carries out the reaction RNA(n) + a ribonucleoside 5'-triphosphate = RNA(n+1) + diphosphate. In terms of biological role, DNA-dependent RNA polymerase catalyzes the transcription of DNA into RNA using the four ribonucleoside triphosphates as substrates. This is DNA-directed RNA polymerase subunit beta from Bordetella pertussis (strain Tohama I / ATCC BAA-589 / NCTC 13251).